Consider the following 350-residue polypeptide: MIIARIFGHLPIATTWEHHVTDILELARTKVLNNGEGLNKEEVLQVLQLDEARIPELLELAHEVRLKWCGEEVEVEGIISLKTGGCPEDCHFCSQSGLFESPVRSAWLDIAGLVEAAKQTQKSGATEFCIVAAVKGPDERLMSQLEEAVAAIKSEVDIEVAASIGILTQEQVDRLKAAGVHRYNHNLETARSYFPNVVTTHSWESRRETLRMVGEAGMEVCSGGIIGMGETLEQRAEFACDLAELNPTEVPMNFLDPRPGTPFADYEVLDTTDALRAIGAFRLALPKTILRFAGGRELTLGDLGTEQGLLGGINAVIVGNYLTTLGRPMEQDLDMLGKLRLPIKALNASV.

Residues glutamate 71–arginine 296 enclose the Radical SAM core domain. [4Fe-4S] cluster contacts are provided by cysteine 86, cysteine 90, and cysteine 93. [2Fe-2S] cluster contacts are provided by cysteine 129, cysteine 221, and arginine 291.

This sequence belongs to the radical SAM superfamily. Biotin synthase family. As to quaternary structure, homodimer. The cofactor is [4Fe-4S] cluster. [2Fe-2S] cluster serves as cofactor.

The enzyme catalyses (4R,5S)-dethiobiotin + (sulfur carrier)-SH + 2 reduced [2Fe-2S]-[ferredoxin] + 2 S-adenosyl-L-methionine = (sulfur carrier)-H + biotin + 2 5'-deoxyadenosine + 2 L-methionine + 2 oxidized [2Fe-2S]-[ferredoxin]. It participates in cofactor biosynthesis; biotin biosynthesis; biotin from 7,8-diaminononanoate: step 2/2. Functionally, catalyzes the conversion of dethiobiotin (DTB) to biotin by the insertion of a sulfur atom into dethiobiotin via a radical-based mechanism. In Corynebacterium diphtheriae (strain ATCC 700971 / NCTC 13129 / Biotype gravis), this protein is Biotin synthase 1.